The chain runs to 296 residues: Nucleotide-binding protein M6_Spy0559 (296 aa).

Position 13–20 (13–20 (GMSGAGKT)) interacts with ATP. 63-66 (DMRS) contributes to the GTP binding site.

The protein belongs to the RapZ-like family.

Functionally, displays ATPase and GTPase activities. This Streptococcus pyogenes serotype M6 (strain ATCC BAA-946 / MGAS10394) protein is Nucleotide-binding protein M6_Spy0559.